Consider the following 697-residue polypeptide: DNA ligase (697 aa).

NAD(+) contacts are provided by residues 36-40, 85-86, and Glu-123; these read DAEYD and SL. The active-site N6-AMP-lysine intermediate is Lys-125. NAD(+) is bound by residues Arg-146, Glu-182, Lys-320, and Lys-344. Positions 438, 441, 456, and 462 each coordinate Zn(2+). Residues 619–697 enclose the BRCT domain; that stretch reads PQGNTLAGKT…EDGLKALLGV (79 aa).

Belongs to the NAD-dependent DNA ligase family. LigA subfamily. Mg(2+) is required as a cofactor. The cofactor is Mn(2+).

The catalysed reaction is NAD(+) + (deoxyribonucleotide)n-3'-hydroxyl + 5'-phospho-(deoxyribonucleotide)m = (deoxyribonucleotide)n+m + AMP + beta-nicotinamide D-nucleotide.. DNA ligase that catalyzes the formation of phosphodiester linkages between 5'-phosphoryl and 3'-hydroxyl groups in double-stranded DNA using NAD as a coenzyme and as the energy source for the reaction. It is essential for DNA replication and repair of damaged DNA. This chain is DNA ligase, found in Bordetella petrii (strain ATCC BAA-461 / DSM 12804 / CCUG 43448).